The following is a 444-amino-acid chain: Aflatoxin biosynthesis regulatory protein (444 aa).

Residues 1–26 (MVDHISPRASPGPIRSSQTRRARKLR) form a disordered region. Residues 29 to 56 (CTSCASSKVRCTKEKPACARCIERGLAC) constitute a DNA-binding region (zn(2)-C6 fungal-type). Residues 64–167 (MGRNPRAPSP…QGLGGDLAGQ (104 aa)) form a disordered region. Residues 106–116 (TQAHTHAHSHP) are compositionally biased toward basic residues. Positions 120 to 130 (PQSHPQSNQPP) are enriched in low complexity. Residues 136-149 (PNGSSSVSAIFSHQ) show a composition bias toward polar residues.

It localises to the nucleus. The protein operates within mycotoxin biosynthesis; aflatoxin biosynthesis. Functionally, involved in the regulation of aflatoxin biosynthesis. May have a role in nitrate assimilation and sclerotial morphogenesis. This chain is Aflatoxin biosynthesis regulatory protein (aflR), found in Aspergillus parasiticus.